Consider the following 475-residue polypeptide: Ankyrin repeat, SAM and basic leucine zipper domain-containing protein 1 (475 aa).

The tract at residues 1-24 (MAAGTVRGLAVAGGGESSESEDDG) is disordered. Residues serine 17, serine 18, and serine 20 each carry the phosphoserine modification. ANK repeat units follow at residues 45 to 74 (EKNETFKKALTTGDISLVQELLDSGLSVDS), 78 to 107 (YGWTPLMYAASVSNVELVRVLLDRGANASF), 110 to 144 (DKQTILITACSARGSEEQILKCVELLLSRNADPNV), 148 to 177 (RLMTPIMYAARDGHPQVVALLVAHGAEVNA), 181 to 210 (NGYTALTWAARQGHKNVVLKLLELGANKML), and 214 to 243 (DGKTPSEIAKRNKHLEIFNFLSLTLNPLEG). The region spanning 272 to 334 (SYTAFGDLEI…KILAALKELE (63 aa)) is the SAM domain.

As to quaternary structure, interacts with DDX4, PIWIL1, RANBP9 and TDRD1.

The protein localises to the cytoplasm. Its function is as follows. Plays a central role during spermatogenesis by repressing transposable elements and preventing their mobilization, which is essential for the germline integrity. Acts via the piRNA metabolic process, which mediates the repression of transposable elements during meiosis by forming complexes composed of piRNAs and Piwi proteins and governs the methylation and subsequent repression of transposons. Its association with pi-bodies suggests a participation in the primary piRNAs metabolic process. Required prior to the pachytene stage to facilitate the production of multiple types of piRNAs, including those associated with repeats involved in the regulation of retrotransposons. May act by mediating protein-protein interactions during germ cell maturation. The sequence is that of Ankyrin repeat, SAM and basic leucine zipper domain-containing protein 1 (ASZ1) from Neofelis nebulosa (Clouded leopard).